The sequence spans 34 residues: Photosystem II reaction center protein M (34 aa).

The helical transmembrane segment at 7–27 (GFIATILFVLVPTVFLLILYI) threads the bilayer.

Belongs to the PsbM family. In terms of assembly, PSII is composed of 1 copy each of membrane proteins PsbA, PsbB, PsbC, PsbD, PsbE, PsbF, PsbH, PsbI, PsbJ, PsbK, PsbL, PsbM, PsbT, PsbX, PsbY, PsbZ, Psb30/Ycf12, peripheral proteins PsbO, CyanoQ (PsbQ), PsbU, PsbV and a large number of cofactors. It forms dimeric complexes.

It is found in the cellular thylakoid membrane. One of the components of the core complex of photosystem II (PSII). PSII is a light-driven water:plastoquinone oxidoreductase that uses light energy to abstract electrons from H(2)O, generating O(2) and a proton gradient subsequently used for ATP formation. It consists of a core antenna complex that captures photons, and an electron transfer chain that converts photonic excitation into a charge separation. This subunit is found at the monomer-monomer interface. This chain is Photosystem II reaction center protein M, found in Picosynechococcus sp. (strain ATCC 27264 / PCC 7002 / PR-6) (Agmenellum quadruplicatum).